Consider the following 97-residue polypeptide: Co-chaperonin GroES (97 aa).

Belongs to the GroES chaperonin family. Heptamer of 7 subunits arranged in a ring. Interacts with the chaperonin GroEL.

The protein resides in the cytoplasm. Functionally, together with the chaperonin GroEL, plays an essential role in assisting protein folding. The GroEL-GroES system forms a nano-cage that allows encapsulation of the non-native substrate proteins and provides a physical environment optimized to promote and accelerate protein folding. GroES binds to the apical surface of the GroEL ring, thereby capping the opening of the GroEL channel. The chain is Co-chaperonin GroES from Buchnera aphidicola subsp. Thelaxes suberi.